Here is a 565-residue protein sequence, read N- to C-terminus: MITPQQPSGMPIEKYRPFPAVALPDRTWPNATITEAPRWCSVDLRDGNQALIDPMTPSRKMQLFELLVAMGYKEIEVGFPAASQTDFDFVRQLIEDDLIPDDVTIQVLTQAREELIERTVTSLVGSDRALIHLYNSTSTLQRRVVFGLDRAGVTDIAVQGARWCAQYAEKLLEGTDVRWQYSPESFTGTELDYALEVCEAVMDVWAPTPDNPVVLNLPATVEMSTPNVYADQIEWMSRNLTRRDAVVLSLHPHNDRGCAVAAAELGVMAGADRVEGCLFGNGERTGNVCLVTLGMNLFSQGIDPMIDLSDIDGVRRTVEYCNQLPVHPRHPYGGDLVYTAFSGSHQDAIKKGFEAMERTGQTLWEVPYLPIDPKDVGRSYEAVIRVNSQSGKGGVAYLMKSEYALDLPRRLQIEFSGVVQKHTDDAGGEVTAGQLWEIFTREYRPEGGDPAASLELLGSRTTAASGARDEVTVSVRLDGTETVITGSGNGPIDAFVAALSERGVPVRVLDYNEHALGSGADARAAAYLEVAVGETVLWGVGIDPNIVTASLRAVVSAVNRASRES.

The 276-residue stretch at 37–312 (PRWCSVDLRD…DPMIDLSDID (276 aa)) folds into the Pyruvate carboxyltransferase domain. D46, H251, H253, and N287 together coordinate Mg(2+). The segment at 446–565 (EGGDPAASLE…SAVNRASRES (120 aa)) is regulatory domain.

This sequence belongs to the alpha-IPM synthase/homocitrate synthase family. LeuA type 2 subfamily. Homodimer. The cofactor is Mg(2+).

The protein localises to the cytoplasm. The enzyme catalyses 3-methyl-2-oxobutanoate + acetyl-CoA + H2O = (2S)-2-isopropylmalate + CoA + H(+). The protein operates within amino-acid biosynthesis; L-leucine biosynthesis; L-leucine from 3-methyl-2-oxobutanoate: step 1/4. Functionally, catalyzes the condensation of the acetyl group of acetyl-CoA with 3-methyl-2-oxobutanoate (2-ketoisovalerate) to form 3-carboxy-3-hydroxy-4-methylpentanoate (2-isopropylmalate). This is 2-isopropylmalate synthase from Parafrankia sp. (strain EAN1pec).